The primary structure comprises 464 residues: GDNF family receptor alpha-2 (464 aa).

An N-terminal signal peptide occupies residues 1–21 (MILANVFCLFFFLDETLRSLA). 11 disulfides stabilise this stretch: Cys40–Cys93, Cys95–Cys105, Cys161–Cys222, Cys168–Cys174, Cys185–Cys200, Cys195–Cys241, Cys224–Cys229, Cys251–Cys323, Cys258–Cys264, Cys275–Cys293, and Cys285–Cys347. The N-linked (GlcNAc...) asparagine glycan is linked to Asn52. Asn357 carries N-linked (GlcNAc...) asparagine glycosylation. A disordered region spans residues 363–392 (VSPKGPSFQATQAPRVEKTPSLPDDLSDST). Over residues 381 to 392 (TPSLPDDLSDST) the composition is skewed to low complexity. Asn413 carries an N-linked (GlcNAc...) asparagine glycan. Ser444 carries GPI-anchor amidated serine lipidation. Positions 445–464 (RARPSAALTVLSVLMLKLAL) are cleaved as a propeptide — removed in mature form.

Belongs to the GDNFR family. In terms of assembly, interacts with NRTN ligand and RET: forms a 2:2:2 ternary complex composed of NRTN ligand, GFRA2 and RET receptor. Also forms a 4:4:4 tetrameric complex composed of 4 copies of NRTN ligand, GFRA2 and RET receptor, which prevents endocytosis of RET. Interacts with SORL1. In terms of tissue distribution, found in both brain and placenta.

It localises to the cell membrane. In terms of biological role, receptor for neurturin (NRTN), a growth factor that supports the survival of sympathetic neurons. NRTN-binding leads to autophosphorylation and activation of the RET receptor. Also able to mediate GDNF signaling through the RET tyrosine kinase receptor. Functionally, participates in NRTN-induced 'Ser-727' phosphorylation of STAT3. The chain is GDNF family receptor alpha-2 (GFRA2) from Homo sapiens (Human).